Here is a 428-residue protein sequence, read N- to C-terminus: Putative zinc metalloprotease SAR1238 (428 aa).

H21 provides a ligand contact to Zn(2+). Residue E22 is part of the active site. Residue H25 coordinates Zn(2+). The next 4 membrane-spanning stretches (helical) occupy residues 172-194, 309-331, 352-374, and 401-420; these read FLTL…IGLA, GSTY…GFSF, IISL…LIPI, and TTII…LVTW. In terms of domain architecture, PDZ spans 186–269; sequence ALVLFIGLAY…TKSVELTPKK (84 aa).

The protein belongs to the peptidase M50B family. Zn(2+) serves as cofactor.

Its subcellular location is the cell membrane. This Staphylococcus aureus (strain MRSA252) protein is Putative zinc metalloprotease SAR1238.